The primary structure comprises 448 residues: tRNA wybutosine-synthesizing protein 2 homolog (448 aa).

S-adenosyl-L-methionine contacts are provided by residues Ser-218, Lys-225, Glu-265, and 293–294 (DN).

This sequence belongs to the class I-like SAM-binding methyltransferase superfamily. TRM5/TYW2 family.

It catalyses the reaction 4-demethylwyosine(37) in tRNA(Phe) + S-adenosyl-L-methionine = 4-demethyl-7-[(3S)-3-amino-3-carboxypropyl]wyosine(37) in tRNA(Phe) + S-methyl-5'-thioadenosine + H(+). It participates in tRNA modification; wybutosine-tRNA(Phe) biosynthesis. S-adenosyl-L-methionine-dependent transferase that acts as a component of the wybutosine biosynthesis pathway. Wybutosine is a hyper modified guanosine with a tricyclic base found at the 3'-position adjacent to the anticodon of eukaryotic phenylalanine tRNA. Catalyzes the transfer of the alpha-amino-alpha-carboxypropyl (acp) group from S-adenosyl-L-methionine to the C-7 position of 4-demethylwyosine (imG-14) to produce wybutosine-86. The protein is tRNA wybutosine-synthesizing protein 2 homolog (TRMT12) of Homo sapiens (Human).